The sequence spans 147 residues: Membrane-spanning 4-domains subfamily A member 6E (147 aa).

Residues 1-52 (MTSQPISNETIIMLPSNVINFSQAEKPEPTNQGQDSLKKRLQAKVKVIGVHS) lie on the Cytoplasmic side of the membrane. Residues 53–73 (SLAGSILSALSALVGFILLSV) form a helical membrane-spanning segment. Over 74 to 120 (NPAALNPASLQCKLDEKDIPTRLLLSYDYHSPYTMDCHRAKASLAGT) the chain is Extracellular. A helical membrane pass occupies residues 121 to 141 (LSLMLVSTVLEFCLAVLTAVL). Residues 142-147 (QWKQTV) lie on the Cytoplasmic side of the membrane.

It belongs to the MS4A family. Expressed by malignant and fetal tissue at very low levels.

It is found in the membrane. May be involved in signal transduction as a component of a multimeric receptor complex. The sequence is that of Membrane-spanning 4-domains subfamily A member 6E (MS4A6E) from Homo sapiens (Human).